Consider the following 294-residue polypeptide: Acetylglutamate kinase (294 aa).

Residues 69–70 (GG), Arg91, and Asn190 contribute to the substrate site.

The protein belongs to the acetylglutamate kinase family. ArgB subfamily.

It localises to the cytoplasm. The catalysed reaction is N-acetyl-L-glutamate + ATP = N-acetyl-L-glutamyl 5-phosphate + ADP. It participates in amino-acid biosynthesis; L-arginine biosynthesis; N(2)-acetyl-L-ornithine from L-glutamate: step 2/4. In terms of biological role, catalyzes the ATP-dependent phosphorylation of N-acetyl-L-glutamate. The protein is Acetylglutamate kinase of Mycobacterium bovis (strain ATCC BAA-935 / AF2122/97).